Here is a 223-residue protein sequence, read N- to C-terminus: Peptidyl-tRNA hydrolase (223 aa).

Residue Tyr16 participates in tRNA binding. Residue His21 is the Proton acceptor of the active site. The tRNA site is built by Phe67, Asn69, and Asn113.

The protein belongs to the PTH family. In terms of assembly, monomer.

The protein localises to the cytoplasm. The catalysed reaction is an N-acyl-L-alpha-aminoacyl-tRNA + H2O = an N-acyl-L-amino acid + a tRNA + H(+). Hydrolyzes ribosome-free peptidyl-tRNAs (with 1 or more amino acids incorporated), which drop off the ribosome during protein synthesis, or as a result of ribosome stalling. Its function is as follows. Catalyzes the release of premature peptidyl moieties from peptidyl-tRNA molecules trapped in stalled 50S ribosomal subunits, and thus maintains levels of free tRNAs and 50S ribosomes. The chain is Peptidyl-tRNA hydrolase from Helicobacter hepaticus (strain ATCC 51449 / 3B1).